The following is a 268-amino-acid chain: Interleukin-1 alpha (268 aa).

Positions 1–112 (MAKVPDLFED…NTEEEIIKPR (112 aa)) are excised as a propeptide. Lysine 82 is modified (N6-acetyllysine). Residues 82–86 (KKRRL) form a nuclear localization signal (NLS) region. Serine 87 bears the Phosphoserine mark. N-linked (GlcNAc...) asparagine glycosylation is found at asparagine 102 and asparagine 141.

It belongs to the IL-1 family. Monomer. Interacts with TMED10; the interaction mediates the translocation from the cytoplasm into the ERGIC (endoplasmic reticulum-Golgi intermediate compartment) and thereby secretion. Interacts with IL1R1. Interacts with S100A13; this interaction is the first step in the export of IL1A, followed by direct translocation of this complex across the plasma membrane. In terms of processing, acetylated within its nuclear localization sequence, which impacts subcellular localization. Proteolytic processed by CAPN1 in a calcium-dependent manner. Cleavage from 31 kDa precursor to 18 kDa biologically active molecules. Post-translationally, phosphorylated. Phosphorylation greatly enhances susceptibility to digestion and promotes the conversion of pre-IL1A alpha to the biologically active IL1A.

The protein localises to the nucleus. The protein resides in the cytoplasm. It is found in the secreted. Functionally, cytokine constitutively present intracellularly in nearly all resting non-hematopoietic cells that plays an important role in inflammation and bridges the innate and adaptive immune systems. After binding to its receptor IL1R1 together with its accessory protein IL1RAP, forms the high affinity interleukin-1 receptor complex. Signaling involves the recruitment of adapter molecules such as MYD88, IRAK1 or IRAK4. In turn, mediates the activation of NF-kappa-B and the three MAPK pathways p38, p42/p44 and JNK pathways. Within the cell, acts as an alarmin and cell death results in its liberation in the extracellular space after disruption of the cell membrane to induce inflammation and alert the host to injury or damage. In addition to its role as a danger signal, which occurs when the cytokine is passively released by cell necrosis, directly senses DNA damage and acts as signal for genotoxic stress without loss of cell integrity. The protein is Interleukin-1 alpha (IL1A) of Bos taurus (Bovine).